Consider the following 202-residue polypeptide: MRNSSLRDASGSNDAQVPHKTELLNLPDHVLTEVAKRLATNNPVESAENIANFSKSHRFTRDAVRTEPLEKFSSRLKILSRNAKLLSHAVRHAATLPDGEQLSEAQLSQMRSEVATRPVLGVAYTHQDGQPEERLSGNHLDHKINNIPNLVFNVAEPIMFNEISALEVMAEVRPIARSIKTAHDDARAELMSADRPRSTRGL.

The segment covering 1–15 (MRNSSLRDASGSNDA) has biased composition (polar residues). Residues 1 to 21 (MRNSSLRDASGSNDAQVPHKT) form a disordered region. Residues 20 to 42 (KTELLNLPDHVLTEVAKRLATNN) enclose the F-box domain.

As to quaternary structure, component of SCF(virF) E3 ubiquitin ligase complexes. Interacts with host VIP1 and SKP1A. Interacts with Arabidopsis thaliana ENAP1/VFP3 and VFP5 in the host cell nucleus.

It localises to the host nucleus. Its function is as follows. In the host plant, component of SCF(virF) E3 ubiquitin ligase complexes, which mediate the ubiquitination and subsequent proteasomal degradation of target proteins such as the host VIP1, after its implication in T-DNA translocation to the host nucleus. Required for the formation of tumors of a wild-type size on certain plant species only. This is Virulence protein F from Agrobacterium tumefaciens (strain 15955).